Reading from the N-terminus, the 460-residue chain is Argininosuccinate lyase (460 aa).

Belongs to the lyase 1 family. Argininosuccinate lyase subfamily.

It localises to the cytoplasm. It carries out the reaction 2-(N(omega)-L-arginino)succinate = fumarate + L-arginine. It participates in amino-acid biosynthesis; L-arginine biosynthesis; L-arginine from L-ornithine and carbamoyl phosphate: step 3/3. The sequence is that of Argininosuccinate lyase from Desulforamulus reducens (strain ATCC BAA-1160 / DSM 100696 / MI-1) (Desulfotomaculum reducens).